Here is a 275-residue protein sequence, read N- to C-terminus: Elongation factor Ts (275 aa).

Lys-36 participates in a covalent cross-link: Isoglutamyl lysine isopeptide (Lys-Gln) (interchain with Q-Cter in protein Pup). Residues 76–79 (TDFV) form an involved in Mg(2+) ion dislocation from EF-Tu region.

The protein belongs to the EF-Ts family.

Its subcellular location is the cytoplasm. In terms of biological role, associates with the EF-Tu.GDP complex and induces the exchange of GDP to GTP. It remains bound to the aminoacyl-tRNA.EF-Tu.GTP complex up to the GTP hydrolysis stage on the ribosome. The polypeptide is Elongation factor Ts (Mycolicibacterium smegmatis (strain ATCC 700084 / mc(2)155) (Mycobacterium smegmatis)).